Consider the following 131-residue polypeptide: UPF0342 protein DSY1594 (131 aa).

This sequence belongs to the UPF0342 family.

The protein is UPF0342 protein DSY1594 of Desulfitobacterium hafniense (strain Y51).